We begin with the raw amino-acid sequence, 278 residues long: Envelope glycoprotein L (278 aa).

Positions 1 to 30 (MCRRPDCGFSFSPGPVILLWCCLLLPIVSS) are cleaved as a signal peptide. A gL betaherpesvirus-type domain is found at 43–256 (VPAECPELTR…DKYYAGLPPE (214 aa)). Cysteine 154 and cysteine 159 are disulfide-bonded.

Belongs to the herpesviridae glycoprotein L (gL) family. Betaherpesvirinae gL subfamily. Interacts with glycoprotein H (gH); this interaction is necessary for the correct processing and cell surface expression of gH. Forms the envelope pentamer complex (PC) composed of gH, gL, UL128, UL130, and UL131A. The pentamer interacts with host NRP2. Forms the envelope trimer complex composed of gH, gL, and gO. The trimer interacts with host PDGFRA. The trimer also interacts with host EPHA2.

It is found in the virion membrane. The protein localises to the host cell membrane. It localises to the host Golgi apparatus. Its subcellular location is the host trans-Golgi network. Functionally, the heterodimer glycoprotein H-glycoprotein L is required for the fusion of viral and plasma membranes leading to virus entry into the host cell. Acts as a functional inhibitor of gH and maintains gH in an inhibited form. Upon binding to host integrins, gL dissociates from gH leading to activation of the viral fusion glycoproteins gB and gH. In human cytomegalovirus, forms two distincts complexes to mediate viral entry, a trimer and a pentamer at the surface of the virion envelope. The gH-gL-gO trimer is required for infection in fibroblasts by interacting with host PDGFRA, and in glioblastoma cells by interacting with host EPHA2. The gH-gL-UL128-UL130-UL131A pentamer is essential for viral entry in epithelial, endothelial and myeloid cells via interaction with host NRP2. In Human cytomegalovirus (strain 5160) (HHV-5), this protein is Envelope glycoprotein L.